Reading from the N-terminus, the 109-residue chain is ATPase inhibitor, mitochondrial (109 aa).

The N-terminal 22 residues, Met1–Arg22, are a transit peptide targeting the mitochondrion. Residues Leu27–Ala56 form an N-terminal inhibitory region region. A disordered region spans residues Leu27–Asp109. Residues Leu30–Ser43 show a composition bias toward gly residues. 2 stretches are compositionally biased toward basic and acidic residues: residues Gln55–Glu69 and His77–Arg98. Residues Ile71–Asp109 are a coiled coil. An antiparallel alpha-helical coiled coil region region spans residues His78 to Asp109. The span at His99–Asp109 shows a compositional bias: basic residues.

It belongs to the ATPase inhibitor family. Homodimer; represents the active form and is present at a pH value below 6.5. Homotetramer; represents the inactive form and is present at a pH value above 7.0.

The protein localises to the mitochondrion. Endogenous F(1)F(o)-ATPase inhibitor limiting ATP depletion when the mitochondrial membrane potential falls below a threshold and the F(1)F(o)-ATP synthase starts hydrolyzing ATP to pump protons out of the mitochondrial matrix. Required to avoid the consumption of cellular ATP when the F(1)F(o)-ATP synthase enzyme acts as an ATP hydrolase. Indirectly acts as a regulator of heme synthesis in erythroid tissues: regulates heme synthesis by modulating the mitochondrial pH and redox potential, allowing fech to efficiently catalyze the incorporation of iron into protoporphyrin IX to produce heme. This Xenopus tropicalis (Western clawed frog) protein is ATPase inhibitor, mitochondrial.